Consider the following 103-residue polypeptide: Putative truncated guanine nucleotide exchange factor YLL017W (103 aa).

One can recognise an SH3 domain in the interval 26–97 (QPIDVVECTY…PPSFYTVHSK (72 aa)).

The protein is Putative truncated guanine nucleotide exchange factor YLL017W of Saccharomyces cerevisiae (strain ATCC 204508 / S288c) (Baker's yeast).